The chain runs to 706 residues: Glutamine-dependent NAD(+) synthetase (706 aa).

The region spanning 5 to 275 is the CN hydrolase domain; it reads VTVATCALNQ…VEVLTATLDL (271 aa). E45 functions as the Proton acceptor; for glutaminase activity in the catalytic mechanism. K114 (for glutaminase activity) is an active-site residue. Residue C175 is the Nucleophile; for glutaminase activity of the active site. The ligase stretch occupies residues 325-706; the sequence is YHSPEEEISL…AEPQSLDGVD (382 aa). 355 to 362 contacts ATP; it reads PLSGGVDS. Residue S357 is part of the active site.

In the C-terminal section; belongs to the NAD synthetase family. Homohexamer.

The enzyme catalyses deamido-NAD(+) + L-glutamine + ATP + H2O = L-glutamate + AMP + diphosphate + NAD(+) + H(+). The protein operates within cofactor biosynthesis; NAD(+) biosynthesis; NAD(+) from deamido-NAD(+) (L-Gln route): step 1/1. In terms of biological role, catalyzes the final step of the nicotinamide adenine dinucleotide (NAD) de novo synthesis pathway, the ATP-dependent amidation of deamido-NAD using L-glutamine as a nitrogen source. This chain is Glutamine-dependent NAD(+) synthetase (NADSYN1), found in Homo sapiens (Human).